The primary structure comprises 71 residues: MGMRMMVTVFPLVVLATTVVSLRSNRASDGRRGIVNKLNDLVPKYWTECCGRIGPHCSRCICPGVVCPKRG.

A signal peptide spans 1–21; sequence MGMRMMVTVFPLVVLATTVVS. Positions 22 to 44 are excised as a propeptide; sequence LRSNRASDGRRGIVNKLNDLVPK. Arginine 70 bears the Arginine amide mark.

It belongs to the conotoxin A superfamily. In terms of processing, contains 3 disulfide bonds. They are not indicated here, since framework IV presents two different connectivities (I-V, II-III, IV-VI and I-III, II-V, IV-VI). In terms of tissue distribution, expressed by the venom duct.

The protein resides in the secreted. The polypeptide is Conotoxin Bu25 (Conus bullatus (Bubble cone)).